Consider the following 132-residue polypeptide: Small ribosomal subunit protein uS8 (132 aa).

It belongs to the universal ribosomal protein uS8 family. In terms of assembly, part of the 30S ribosomal subunit. Contacts proteins S5 and S12.

One of the primary rRNA binding proteins, it binds directly to 16S rRNA central domain where it helps coordinate assembly of the platform of the 30S subunit. This Lactobacillus johnsonii (strain CNCM I-12250 / La1 / NCC 533) protein is Small ribosomal subunit protein uS8.